The chain runs to 360 residues: U7 snRNA-associated Sm-like protein LSm11 (360 aa).

Positions 1–29 are disordered; it reads MEERERGARSAGAGSPARPPSPRLDVSSD. Phosphoserine is present on residues Ser15 and Ser21. Position 41 is an omega-N-methylarginine (Arg41). The segment at 68-143 is disordered; the sequence is RGGGRGRGRA…PGRSRKAPRN (76 aa). Over residues 78 to 94 the composition is skewed to low complexity; that stretch reads RGAAAGSGVPAAPGPSG. Lys120 participates in a covalent cross-link: Glycyl lysine isopeptide (Lys-Gly) (interchain with G-Cter in SUMO2). Ser154 is subject to Phosphoserine. One can recognise a Sm domain in the interval 154–229; the sequence is SPLGELHRCI…LTLTRLFDRL (76 aa). Positions 171-204 are SM 1; that stretch reads VHIRTFKGLRGVCTGFLVAFDKFWNMALTDVDET. Residues 268-333 form a disordered region; that stretch reads ADTGRGSHKR…SRKKKRKPKV (66 aa). Ser280 carries the phosphoserine modification. The segment covering 299 to 322 has biased composition (polar residues); the sequence is GRTTRTDGSSVGGTFSRATTLSRG. The tract at residues 343–356 is SM 2; that stretch reads INQIFIRGENVLLV.

It belongs to the snRNP Sm proteins family. As to quaternary structure, component of the heptameric ring U7 snRNP complex, or U7 Sm protein core complex, at least composed of LSM10, LSM11, SNRPB, SNRPD3, SNRPE, SNRPF, SNRPG and U7 snRNA. Formation of the U7 snRNP is an ATP-dependent process mediated by a specialized SMN complex containing at least the Sm protein core complex and additionally, the U7-specific LSM10 and LSM11 proteins. Identified in a histone pre-mRNA complex, at least composed of ERI1, LSM11, SLBP, SNRPB, SYNCRIP and YBX1. Interacts (via the Sm domains) with CLNS1A. Interacts with SMN and ZNF473. Interacts with PRMT5 and WDR77.

The protein resides in the nucleus. Component of the U7 snRNP complex that is involved in the histone 3'-end pre-mRNA processing. Increases U7 snRNA levels but not histone 3'-end pre-mRNA processing activity, when overexpressed. Required for cell cycle progression from G1 to S phases. Binds specifically to the Sm-binding site of U7 snRNA. The polypeptide is U7 snRNA-associated Sm-like protein LSm11 (Homo sapiens (Human)).